The chain runs to 340 residues: Phosphoribosylformylglycinamidine cyclo-ligase (340 aa).

Belongs to the AIR synthase family.

It is found in the cytoplasm. The catalysed reaction is 2-formamido-N(1)-(5-O-phospho-beta-D-ribosyl)acetamidine + ATP = 5-amino-1-(5-phospho-beta-D-ribosyl)imidazole + ADP + phosphate + H(+). The protein operates within purine metabolism; IMP biosynthesis via de novo pathway; 5-amino-1-(5-phospho-D-ribosyl)imidazole from N(2)-formyl-N(1)-(5-phospho-D-ribosyl)glycinamide: step 2/2. The chain is Phosphoribosylformylglycinamidine cyclo-ligase from Streptococcus pneumoniae (strain Taiwan19F-14).